We begin with the raw amino-acid sequence, 1818 residues long: Nestin (1818 aa).

The segment at 1–14 (WREKLEAEVQRQNL) is coil 1B. Positions 1 to 135 (WREKLEAEVQ…TLLEAENSRL (135 aa)) constitute an IF rod domain. The interval 15–17 (YQE) is linker 2. A coil 2B region spans residues 18–135 (RVAHMESSLG…TLLEAENSRL (118 aa)). Residue Ser-133 is modified to Phosphoserine. The segment at 136-1818 (QTPGRSSQAS…DRDSWSSGED (1683 aa)) is tail. Residues Thr-137 and Thr-160 each carry the phosphothreonine modification. Ser-180 carries the post-translational modification Phosphoserine. Thr-210 carries the post-translational modification Phosphothreonine. 4 disordered regions span residues 266 to 309 (EEAG…GSSI), 336 to 355 (AQETQEDGLHTEEIQDSQGP), 377 to 451 (HETP…SPEG), and 480 to 787 (AFKK…EEDQ). Ser-288 is subject to Phosphoserine. Positions 292-303 (PVLEAKDGDSTE) are enriched in basic and acidic residues. Polar residues predominate over residues 382–398 (KENCNSLRSVDENQGTL). Phosphoserine is present on residues Ser-390 and Ser-400. Composition is skewed to basic and acidic residues over residues 400–427 (SPEEEKQTLLKSLEEKDVEVEKTLEKGV) and 434–443 (LGKEDPRIED). Ser-448 is modified (phosphoserine). The segment covering 495–508 (EIQRVERLIEKEGQ) has biased composition (basic and acidic residues). Ser-513 bears the Phosphoserine mark. Basic and acidic residues-rich tracts occupy residues 521–536 (TDRPLEKENGEPLKPV) and 565–586 (TDRPLEKEEDQLVERLVEKEGQ). Phosphoserine is present on Ser-591. Basic and acidic residues-rich tracts occupy residues 599–614 (TDRPLEKENGEPLKPV), 643–664 (TDRPLEKEEDQLVERLVEKEGQ), and 711–732 (TDRPLEKEEDQRVERLIEKEGQ). Ser-737 is modified (phosphoserine). The span at 744–773 (ETYRLLEKENGEPLKPVEEEDQRVERLIEK) shows a compositional bias: basic and acidic residues. 2 positions are modified to phosphoserine: Ser-803 and Ser-824. Positions 866–900 (ESLLKKGTQESLESHEDRNQETQDPQRFLEEEGQG) are disordered. The span at 868–886 (LLKKGTQESLESHEDRNQE) shows a compositional bias: basic and acidic residues. Phosphoserine occurs at positions 915 and 957. Residues 945 to 998 (SLLERESQDSGKSLEGQEAFRCLGKEDPESLQFPEVQDQEIQRSLQQETQQTLG) are disordered. Positions 986-997 (QRSLQQETQQTL) are enriched in polar residues. A Glycyl lysine isopeptide (Lys-Gly) (interchain with G-Cter in SUMO1); alternate cross-link involves residue Lys-1043. Lys-1043 participates in a covalent cross-link: Glycyl lysine isopeptide (Lys-Gly) (interchain with G-Cter in SUMO2); alternate. Ser-1052, Ser-1063, Ser-1073, Ser-1123, Ser-1134, Ser-1162, and Ser-1238 each carry phosphoserine. Disordered regions lie at residues 1134-1262 (SPEA…LEGQ) and 1334-1818 (HPSL…SGED). 2 stretches are compositionally biased toward basic and acidic residues: residues 1342-1361 (VEAKIAHDLEGPGKEPKEAG) and 1401-1416 (ASDHEGSDAPEPRPSE). The span at 1490 to 1505 (QDWEESREESEADELG) shows a compositional bias: acidic residues. Phosphoserine occurs at positions 1495, 1499, and 1523. The span at 1570 to 1579 (LSSEEFEDLG) shows a compositional bias: acidic residues. Phosphoserine is present on residues Ser-1614 and Ser-1623. Residues 1616 to 1636 (GFADEEESGEEGEEEEHEDGT) are compositionally biased toward acidic residues. Residues 1686 to 1697 (GLETESQDSAEP) show a composition bias toward polar residues. Ser-1698, Ser-1700, Ser-1791, Ser-1814, and Ser-1815 each carry phosphoserine. The segment covering 1698–1708 (SGSEVSESVSS) has biased composition (low complexity).

Belongs to the intermediate filament family. Interacts with FHOD3. Forms homodimers and homotetramers in vitro. In mixtures with other intermediate filament proteins such as vimentin and alpha-internexin, preferentially forms heterodimers which can assemble to form intermediate filaments if nestin does not exceed 25%. Constitutively phosphorylated. This increases during mitosis when the cytoplasmic intermediate filament network is reorganized.

In terms of biological role, required for brain and eye development. Promotes the disassembly of phosphorylated vimentin intermediate filaments (IF) during mitosis and may play a role in the trafficking and distribution of IF proteins and other cellular factors to daughter cells during progenitor cell division. Required for survival, renewal and mitogen-stimulated proliferation of neural progenitor cells. The sequence is that of Nestin from Mesocricetus auratus (Golden hamster).